Consider the following 394-residue polypeptide: Phosphopentomutase (394 aa).

Aspartate 14, aspartate 287, histidine 292, aspartate 328, histidine 329, and histidine 340 together coordinate Mn(2+).

It belongs to the phosphopentomutase family. Requires Mn(2+) as cofactor.

It localises to the cytoplasm. The enzyme catalyses 2-deoxy-alpha-D-ribose 1-phosphate = 2-deoxy-D-ribose 5-phosphate. The catalysed reaction is alpha-D-ribose 1-phosphate = D-ribose 5-phosphate. It participates in carbohydrate degradation; 2-deoxy-D-ribose 1-phosphate degradation; D-glyceraldehyde 3-phosphate and acetaldehyde from 2-deoxy-alpha-D-ribose 1-phosphate: step 1/2. Isomerase that catalyzes the conversion of deoxy-ribose 1-phosphate (dRib-1-P) and ribose 1-phosphate (Rib-1-P) to deoxy-ribose 5-phosphate (dRib-5-P) and ribose 5-phosphate (Rib-5-P), respectively. In Listeria monocytogenes serotype 4b (strain CLIP80459), this protein is Phosphopentomutase.